The following is a 208-amino-acid chain: Uracil phosphoribosyltransferase (208 aa).

Residues Arg-78, Arg-103, and Asp-130–Ser-138 contribute to the 5-phospho-alpha-D-ribose 1-diphosphate site. Residues Ile-193 and Gly-198–Ala-200 contribute to the uracil site. Asp-199 serves as a coordination point for 5-phospho-alpha-D-ribose 1-diphosphate.

It belongs to the UPRTase family. The cofactor is Mg(2+).

The enzyme catalyses UMP + diphosphate = 5-phospho-alpha-D-ribose 1-diphosphate + uracil. It participates in pyrimidine metabolism; UMP biosynthesis via salvage pathway; UMP from uracil: step 1/1. Allosterically activated by GTP. Functionally, catalyzes the conversion of uracil and 5-phospho-alpha-D-ribose 1-diphosphate (PRPP) to UMP and diphosphate. This Pectobacterium atrosepticum (strain SCRI 1043 / ATCC BAA-672) (Erwinia carotovora subsp. atroseptica) protein is Uracil phosphoribosyltransferase.